Reading from the N-terminus, the 295-residue chain is UDP-N-acetylenolpyruvoylglucosamine reductase (295 aa).

An FAD-binding PCMH-type domain is found at 26 to 189 (VGGRADILFK…VEAEFKGVNS (164 aa)). The active site involves arginine 169. Cysteine 218 serves as the catalytic Proton donor. The active site involves glutamate 288.

The protein belongs to the MurB family. FAD serves as cofactor.

The protein localises to the cytoplasm. It carries out the reaction UDP-N-acetyl-alpha-D-muramate + NADP(+) = UDP-N-acetyl-3-O-(1-carboxyvinyl)-alpha-D-glucosamine + NADPH + H(+). It participates in cell wall biogenesis; peptidoglycan biosynthesis. Functionally, cell wall formation. This is UDP-N-acetylenolpyruvoylglucosamine reductase from Wolbachia sp. subsp. Drosophila simulans (strain wRi).